Here is a 501-residue protein sequence, read N- to C-terminus: Cytochrome P450 4c21 (501 aa).

2 residues coordinate heme: Glu309 and Cys447.

Belongs to the cytochrome P450 family. Heme is required as a cofactor.

The protein localises to the endoplasmic reticulum membrane. Its subcellular location is the microsome membrane. The catalysed reaction is an organic molecule + reduced [NADPH--hemoprotein reductase] + O2 = an alcohol + oxidized [NADPH--hemoprotein reductase] + H2O + H(+). This chain is Cytochrome P450 4c21 (CYP4C21), found in Blattella germanica (German cockroach).